The chain runs to 142 residues: Large ribosomal subunit protein uL13 (142 aa).

It belongs to the universal ribosomal protein uL13 family. Part of the 50S ribosomal subunit.

Its function is as follows. This protein is one of the early assembly proteins of the 50S ribosomal subunit, although it is not seen to bind rRNA by itself. It is important during the early stages of 50S assembly. This chain is Large ribosomal subunit protein uL13, found in Azotobacter vinelandii (strain DJ / ATCC BAA-1303).